We begin with the raw amino-acid sequence, 415 residues long: Gamma-glutamyl phosphate reductase (415 aa).

The protein belongs to the gamma-glutamyl phosphate reductase family.

The protein localises to the cytoplasm. The enzyme catalyses L-glutamate 5-semialdehyde + phosphate + NADP(+) = L-glutamyl 5-phosphate + NADPH + H(+). It participates in amino-acid biosynthesis; L-proline biosynthesis; L-glutamate 5-semialdehyde from L-glutamate: step 2/2. Its function is as follows. Catalyzes the NADPH-dependent reduction of L-glutamate 5-phosphate into L-glutamate 5-semialdehyde and phosphate. The product spontaneously undergoes cyclization to form 1-pyrroline-5-carboxylate. In Dictyoglomus thermophilum (strain ATCC 35947 / DSM 3960 / H-6-12), this protein is Gamma-glutamyl phosphate reductase.